We begin with the raw amino-acid sequence, 198 residues long: Small ribosomal subunit protein eS1 (198 aa).

Belongs to the eukaryotic ribosomal protein eS1 family.

This is Small ribosomal subunit protein eS1 from Nanoarchaeum equitans (strain Kin4-M).